A 365-amino-acid chain; its full sequence is Neuronal migration protein doublecortin (365 aa).

A disordered region spans residues 11-31; it reads RDKTSRNMRGSRMNGLPSPTH. The residue at position 14 (Thr14) is a Phosphothreonine; by PKC. Ser28 bears the Phosphoserine; by CDK5 mark. At Ser47 the chain carries Phosphoserine; by MARK1 and PKA. Doublecortin domains follow at residues 53 to 139 and 180 to 263; these read KKVR…VEYT and KLVT…AQDD. Residue Tyr70 is modified to Phosphotyrosine; by ABL. Residue Ser74 is modified to Phosphoserine; by PKC. Ser90 is modified (phosphoserine; by CK2). Residue Ser110 is modified to Phosphoserine; by PKC. Ser115 bears the Phosphoserine; by CK2, MARK1 and PKA mark. Phosphoserine; by CK2 is present on Ser265. The interval 275–365 is disordered; the sequence is KGNPSATAGP…DDSDSLGDSM (91 aa). Ser287 bears the Phosphoserine; by CDK5 mark. Position 289 is a phosphothreonine; by CDK5 (Thr289). Ser294 is subject to Phosphoserine; by PKC. A Phosphoserine; by CDK5 modification is found at Ser297. Ser306 carries the post-translational modification Phosphoserine; by CK2. Ser306 bears the Phosphoserine; by DYRK2 mark. Polar residues predominate over residues 307–341; sequence PADSGNDQDANGTSSSQLSTPKSKQSPISTPTSPG. Residue Thr326 is modified to Phosphothreonine; by CDK5. Residue Thr326 is modified to Phosphothreonine; by PKC and MAPK. Ser332 bears the Phosphoserine; by CDK5 mark. A Phosphoserine; by MAPK modification is found at Ser332. The residue at position 336 (Thr336) is a Phosphothreonine; by MAPK. Phosphoserine; by CDK5 is present on Ser339. Ser339 is modified (phosphoserine; by MAPK). Ser342 carries the phosphoserine; by PKC modification. Phosphoserine; by CK2 is present on residues Ser354 and Ser360. Positions 356–365 are enriched in acidic residues; it reads DDSDSLGDSM.

In terms of assembly, interacts with tubulin. Interacts with USP9X. Post-translationally, phosphorylation by MARK1, MARK2 and PKA regulates its ability to bind microtubules. Phosphorylation at Ser-265 and Ser-297 seems to occur only in neonatal brain, the levels falling precipitously by postnatal day 21. Ubiquitinated by MDM2, leading to its degradation by the proteasome. Ubiquitinated by MDM2 and subsequent degradation leads to reduce the dendritic spine density of olfactory bulb granule cells. In terms of tissue distribution, highly expressed in neuronal cells of fetal brain (in the majority of cells of the cortical plate, intermediate zone and ventricular zone), but not expressed in other fetal tissues. In the adult, highly expressed in the brain frontal lobe, but very low expression in other regions of brain, and not detected in heart, placenta, lung, liver, skeletal muscles, kidney and pancreas.

The protein localises to the cytoplasm. It localises to the cell projection. Its subcellular location is the neuron projection. Microtubule-associated protein required for initial steps of neuronal dispersion and cortex lamination during cerebral cortex development. May act by competing with the putative neuronal protein kinase DCLK1 in binding to a target protein. May in that way participate in a signaling pathway that is crucial for neuronal interaction before and during migration, possibly as part of a calcium ion-dependent signal transduction pathway. May be part with PAFAH1B1/LIS-1 of overlapping, but distinct, signaling pathways that promote neuronal migration. The polypeptide is Neuronal migration protein doublecortin (DCX) (Homo sapiens (Human)).